We begin with the raw amino-acid sequence, 557 residues long: Urocanate hydratase (557 aa).

NAD(+) contacts are provided by residues 52–53 (GG), Q130, 176–178 (GMG), E196, R201, 242–243 (NA), 263–267 (QTSAH), 273–274 (YL), and Y322. C410 is a catalytic residue. G492 serves as a coordination point for NAD(+).

The protein belongs to the urocanase family. The cofactor is NAD(+).

The protein resides in the cytoplasm. The enzyme catalyses 4-imidazolone-5-propanoate = trans-urocanate + H2O. It participates in amino-acid degradation; L-histidine degradation into L-glutamate; N-formimidoyl-L-glutamate from L-histidine: step 2/3. Functionally, catalyzes the conversion of urocanate to 4-imidazolone-5-propionate. The protein is Urocanate hydratase of Pseudoalteromonas translucida (strain TAC 125).